A 244-amino-acid chain; its full sequence is Phosphoadenosine 5'-phosphosulfate reductase (244 aa).

The Nucleophile; cysteine thiosulfonate intermediate role is filled by cysteine 239.

Belongs to the PAPS reductase family. CysH subfamily.

Its subcellular location is the cytoplasm. The enzyme catalyses [thioredoxin]-disulfide + sulfite + adenosine 3',5'-bisphosphate + 2 H(+) = [thioredoxin]-dithiol + 3'-phosphoadenylyl sulfate. It participates in sulfur metabolism; hydrogen sulfide biosynthesis; sulfite from sulfate: step 3/3. In terms of biological role, catalyzes the formation of sulfite from phosphoadenosine 5'-phosphosulfate (PAPS) using thioredoxin as an electron donor. This chain is Phosphoadenosine 5'-phosphosulfate reductase, found in Klebsiella pneumoniae (strain 342).